The following is a 233-amino-acid chain: Transmembrane protein 40 (233 aa).

M1 carries the post-translational modification N-acetylmethionine. Over residues 1–14 (METSASSSQPQDNS) the composition is skewed to polar residues. A disordered region spans residues 1-143 (METSASSSQP…RRGSDPASGE (143 aa)). Positions 50–70 (SSSSSSSSSSSSSSSSSSSSS) are enriched in low complexity. Residues 93–104 (YPHGNGSPGPGH) show a composition bias toward gly residues. Residues 105-114 (GEPDVLKDEL) show a composition bias toward basic and acidic residues. Phosphoserine is present on S137. 2 helical membrane-spanning segments follow: residues 160–180 (FFHFVLLCFAIGALLVCYHYY) and 187–207 (LGVGLLTFASLETVGIYFGLV).

The protein resides in the membrane. The sequence is that of Transmembrane protein 40 (TMEM40) from Homo sapiens (Human).